We begin with the raw amino-acid sequence, 129 residues long: Glycine cleavage system H protein (129 aa).

Positions 24-106 constitute a Lipoyl-binding domain; sequence TFTVGISEHA…YGDGWLFRIK (83 aa). Lys65 carries the N6-lipoyllysine modification.

Belongs to the GcvH family. As to quaternary structure, the glycine cleavage system is composed of four proteins: P, T, L and H. Requires (R)-lipoate as cofactor.

In terms of biological role, the glycine cleavage system catalyzes the degradation of glycine. The H protein shuttles the methylamine group of glycine from the P protein to the T protein. The polypeptide is Glycine cleavage system H protein (Pseudoalteromonas atlantica (strain T6c / ATCC BAA-1087)).